The chain runs to 423 residues: Gamma-glutamyl phosphate reductase (423 aa).

The span at Met-1–Gln-14 shows a compositional bias: low complexity. The tract at residues Met-1–Asp-25 is disordered. Residues Arg-15–Asp-25 are compositionally biased toward basic and acidic residues.

Belongs to the gamma-glutamyl phosphate reductase family.

Its subcellular location is the cytoplasm. The enzyme catalyses L-glutamate 5-semialdehyde + phosphate + NADP(+) = L-glutamyl 5-phosphate + NADPH + H(+). The protein operates within amino-acid biosynthesis; L-proline biosynthesis; L-glutamate 5-semialdehyde from L-glutamate: step 2/2. Functionally, catalyzes the NADPH-dependent reduction of L-glutamate 5-phosphate into L-glutamate 5-semialdehyde and phosphate. The product spontaneously undergoes cyclization to form 1-pyrroline-5-carboxylate. The polypeptide is Gamma-glutamyl phosphate reductase (Mycobacterium ulcerans (strain Agy99)).